A 294-amino-acid polypeptide reads, in one-letter code: Indole-3-glycerol phosphate synthase (294 aa).

This sequence belongs to the TrpC family.

The enzyme catalyses 1-(2-carboxyphenylamino)-1-deoxy-D-ribulose 5-phosphate + H(+) = (1S,2R)-1-C-(indol-3-yl)glycerol 3-phosphate + CO2 + H2O. It functions in the pathway amino-acid biosynthesis; L-tryptophan biosynthesis; L-tryptophan from chorismate: step 4/5. The sequence is that of Indole-3-glycerol phosphate synthase from Synechococcus sp. (strain WH7803).